The following is a 316-amino-acid chain: Protoheme IX farnesyltransferase 2 (316 aa).

Residues 1 to 15 (MEQNLNSEQKPQSSA) are compositionally biased toward polar residues. The interval 1-24 (MEQNLNSEQKPQSSAKPRGKSSRS) is disordered. 7 helical membrane-spanning segments follow: residues 62 to 82 (IPEMIFSTVGSALVIGAAGAF), 117 to 137 (IVMLIIGLAVLALASPLAAAF), 163 to 183 (IGSISGAVPPLIGWSAVSTDI), 188 to 208 (IARFIFVMVIWQMPHFYAIAI), 231 to 251 (TYYQTNFYLILLILSSFLFGS), 252 to 272 (LSVGIMLVALLLSIAWLVMSI), and 293 to 313 (LFHMTILFTTVIVYSLVGVIF).

Belongs to the UbiA prenyltransferase family. Protoheme IX farnesyltransferase subfamily. Interacts with CtaA.

It is found in the cell membrane. It catalyses the reaction heme b + (2E,6E)-farnesyl diphosphate + H2O = Fe(II)-heme o + diphosphate. The protein operates within porphyrin-containing compound metabolism; heme O biosynthesis; heme O from protoheme: step 1/1. Functionally, converts heme B (protoheme IX) to heme O by substitution of the vinyl group on carbon 2 of heme B porphyrin ring with a hydroxyethyl farnesyl side group. This is Protoheme IX farnesyltransferase 2 from Lysinibacillus sphaericus (strain C3-41).